The following is a 242-amino-acid chain: Neuromodulin (242 aa).

Residues 1-242 are disordered; sequence MLCCMRRTKQ…EEREADQEHA (242 aa). Residues cysteine 3 and cysteine 4 are each lipidated (S-palmitoyl cysteine). The segment covering 9 to 32 has biased composition (basic and acidic residues); the sequence is KQVEKNDEDQKIEQDGIKPEDKAH. The IQ domain occupies 31–60; sequence AHKAATKIQASFRGHITRKKLKGEKKGDAP. Serine 41 is subject to Phosphoserine; by PHK and PKC. Residues 66–84 are compositionally biased toward basic and acidic residues; sequence ANEKDEAAVAEGTEKKEGE. A compositionally biased stretch (low complexity) spans 85–97; that stretch reads GSTPAEAAPGAGP. Serine 86 carries the phosphoserine modification. Residues 98–118 show a composition bias toward basic and acidic residues; that stretch reads KPEEKTGKAGETPSEEKKGEG. The span at 119–134 shows a compositional bias: low complexity; sequence APDAATEQAAPQAPAP. The span at 143-158 shows a compositional bias: polar residues; it reads ETESATKASTDNSPSS. A phosphoserine mark is found at serine 155, serine 157, and serine 158. Over residues 159–171 the composition is skewed to basic and acidic residues; it reads KAEDAPAKEEPKQ. Over residues 172–204 the composition is skewed to low complexity; the sequence is ADVPAAVTAAAATAPAAEDAAAMATAQPPTETA. Phosphoserine; by CK2 is present on residues serine 206 and serine 207. Residues 209 to 242 show a composition bias toward basic and acidic residues; it reads AEEKIEAVDETKPKDSARQDEGKGEEREADQEHA.

Belongs to the neuromodulin family. Identified in a complex containing FGFR4, NCAM1, CDH2, PLCG1, FRS2, SRC, SHC1, GAP43 and CTTN. Interacts (via IQ domain) with calmodulin. Binds calmodulin with a greater affinity in the absence of Ca(2+) than in its presence. Phosphorylated. Phosphorylation of this protein by a protein kinase C is specifically correlated with certain forms of synaptic plasticity. Post-translationally, palmitoylated by ZDHHC3. Palmitoylation is regulated by ARF6 and is essential for plasma membrane association and axonal and dendritic filopodia induction. Deacylated by LYPLA2.

Its subcellular location is the cell membrane. It is found in the cell projection. It localises to the growth cone membrane. The protein resides in the synapse. The protein localises to the filopodium membrane. Its subcellular location is the perikaryon. It is found in the dendrite. It localises to the axon. The protein resides in the cytoplasm. Functionally, this protein is associated with nerve growth. It is a major component of the motile 'growth cones' that form the tips of elongating axons. Plays a role in axonal and dendritic filopodia induction. The chain is Neuromodulin (GAP43) from Bos taurus (Bovine).